A 202-amino-acid chain; its full sequence is AFG2-interacting ribosome maturation factor (202 aa).

As to quaternary structure, part of the 55LCC heterohexameric ATPase complex. Does not associate with pre-60S ribosomal particles.

Its subcellular location is the nucleus. It localises to the cytoplasm. Part of the 55LCC heterohexameric ATPase complex which is chromatin-associated and promotes replisome proteostasis to maintain replication fork progression and genome stability. Required for replication fork progression, sister chromatid cohesion, and chromosome stability. The ATPase activity is specifically enhanced by replication fork DNA and is coupled to cysteine protease-dependent cleavage of replisome substrates in response to replication fork damage. Uses ATPase activity to process replisome substrates in S-phase, facilitating their proteolytic turnover from chromatin to ensure DNA replication and mitotic fidelity. Involved in the cytoplasmic maturation steps of pre-60S ribosomal particles by promoting the release of shuttling protein RSL24D1/RLP24 from the pre-ribosomal particles. Plays an essential role in early embryonic development. This is AFG2-interacting ribosome maturation factor (airim) from Danio rerio (Zebrafish).